Consider the following 155-residue polypeptide: MAEGEITTFTALTEKFNLPPGNYKKPKLLYCSNGGHFLRILPDGTVDGTRDRSDQHIQLQLSAESVGEVYIKSTETGQYLAMDTDGLLYGSQTPNEECLFLERLEENHYNTYISKKHAEKNWFVGLKKNGSCKRGPRTHYGQKAILFLPLPVSSD.

Ala2 carries the post-translational modification N-acetylalanine. Residues 2-15 constitute a propeptide that is removed on maturation; sequence AEGEITTFTALTEK. A Nuclear localization signal motif is present at residues 24–27; it reads KKPK. A heparin-binding site is contributed by Asn33. Residues 127-143 form a heparin-binding region; it reads KKNGSCKRGPRTHYGQK.

It belongs to the heparin-binding growth factors family. As to quaternary structure, monomer. Homodimer. Interacts with FGFR1, FGFR2, FGFR3 and FGFR4. Affinity between fibroblast growth factors (FGFs) and their receptors is increased by heparan sulfate glycosaminoglycans that function as coreceptors. Found in a complex with FGFBP1, FGF1 and FGF2. Interacts with FGFBP1. Part of a Cu(2+)-dependent multiprotein aggregate containing FGF1, S100A13 and SYT1. Interacts with SYT1. Interacts with S100A13. Interacts with LRRC59. Interacts with CSNKA, CSNKB and FIBP. While binding with LRRC59, CSNKA and FIBP seem mutually exclusive, CSNKB and FIBP may cooperatively interact with FGF1. Forms a ternary complex with FGFR1 and ITGAV:ITGB3 and induces the recruitment of PTPN11 to the complex. In terms of processing, in the nucleus, phosphorylated by PKC/PRKCD. As to expression, predominantly expressed in kidney and brain. Detected at much lower levels in heart and skeletal muscle.

It localises to the secreted. The protein localises to the cytoplasm. The protein resides in the cell cortex. Its subcellular location is the cytosol. It is found in the nucleus. Its function is as follows. Plays an important role in the regulation of cell survival, cell division, angiogenesis, cell differentiation and cell migration. Functions as a potent mitogen in vitro. Acts as a ligand for FGFR1 and integrins. Binds to FGFR1 in the presence of heparin leading to FGFR1 dimerization and activation via sequential autophosphorylation on tyrosine residues which act as docking sites for interacting proteins, leading to the activation of several signaling cascades. Binds to integrin ITGAV:ITGB3. Its binding to integrin, subsequent ternary complex formation with integrin and FGFR1, and the recruitment of PTPN11 to the complex are essential for FGF1 signaling. Induces the phosphorylation and activation of FGFR1, FRS2, MAPK3/ERK1, MAPK1/ERK2 and AKT1. Can induce angiogenesis. This is Fibroblast growth factor 1 (FGF1) from Homo sapiens (Human).